Reading from the N-terminus, the 695-residue chain is Translation initiation factor IF-2 (695 aa).

A disordered region spans residues Lys-60–Pro-92. In terms of domain architecture, tr-type G spans Gln-184–Thr-358. The interval Gly-193–Thr-200 is G1. Gly-193–Thr-200 contacts GTP. The interval Gly-218 to Ser-222 is G2. Residues Asp-239–Gly-242 are G3. GTP-binding positions include Asp-239–His-243 and Asn-293–Asp-296. Residues Asn-293–Asp-296 form a G4 region. The tract at residues Ser-330–Lys-332 is G5.

Belongs to the TRAFAC class translation factor GTPase superfamily. Classic translation factor GTPase family. IF-2 subfamily.

It is found in the cytoplasm. One of the essential components for the initiation of protein synthesis. Protects formylmethionyl-tRNA from spontaneous hydrolysis and promotes its binding to the 30S ribosomal subunits. Also involved in the hydrolysis of GTP during the formation of the 70S ribosomal complex. This chain is Translation initiation factor IF-2, found in Kosmotoga olearia (strain ATCC BAA-1733 / DSM 21960 / TBF 19.5.1).